The primary structure comprises 162 residues: ATP synthase subunit b 1 (162 aa).

The helical transmembrane segment at methionine 1–tryptophan 21 threads the bilayer.

The protein belongs to the ATPase B chain family. F-type ATPases have 2 components, F(1) - the catalytic core - and F(0) - the membrane proton channel. F(1) has five subunits: alpha(3), beta(3), gamma(1), delta(1), epsilon(1). F(0) has three main subunits: a(1), b(2) and c(10-14). The alpha and beta chains form an alternating ring which encloses part of the gamma chain. F(1) is attached to F(0) by a central stalk formed by the gamma and epsilon chains, while a peripheral stalk is formed by the delta and b chains.

It localises to the cell inner membrane. F(1)F(0) ATP synthase produces ATP from ADP in the presence of a proton or sodium gradient. F-type ATPases consist of two structural domains, F(1) containing the extramembraneous catalytic core and F(0) containing the membrane proton channel, linked together by a central stalk and a peripheral stalk. During catalysis, ATP synthesis in the catalytic domain of F(1) is coupled via a rotary mechanism of the central stalk subunits to proton translocation. Its function is as follows. Component of the F(0) channel, it forms part of the peripheral stalk, linking F(1) to F(0). In Methylorubrum extorquens (strain PA1) (Methylobacterium extorquens), this protein is ATP synthase subunit b 1.